We begin with the raw amino-acid sequence, 993 residues long: Receptor-type tyrosine-protein kinase FLT3 (993 aa).

Residues 1-26 (MPALARDGGQLPLLVVFSAMIFGTIT) form the signal peptide. Residues 27–543 (NQDLPVIKCV…PFPFIQDNIS (517 aa)) are Extracellular-facing. C35 and C65 are oxidised to a cystine. N-linked (GlcNAc...) asparagine glycans are attached at residues N43 and N100. C103 and C114 are oxidised to a cystine. Residue N151 is glycosylated (N-linked (GlcNAc...) asparagine). Intrachain disulfides connect C199–C206, C232–C241, and C272–C330. An Ig-like C2-type domain is found at 253–343 (PQTTLPQLFL…KHPSQSALVT (91 aa)). N-linked (GlcNAc...) asparagine glycosylation is found at N306, N323, N351, and N354. 2 cysteine pairs are disulfide-bonded: C368/C407 and C381/C392. 3 N-linked (GlcNAc...) asparagine glycosylation sites follow: N473, N502, and N541. The helical transmembrane segment at 544–563 (FYATIGVCLLFIVVLTLLIC) threads the bilayer. Over 564-993 (HKYKKQFRYE…LSPQAQVEDS (430 aa)) the chain is Cytoplasmic. Phosphotyrosine is present on Y572. Position 574 is a phosphoserine (S574). Residues Y589, Y591, and Y599 each carry the phosphotyrosine; by autocatalysis modification. The tract at residues 591–597 (YVDFREY) is important for normal regulation of the kinase activity and for maintaining the kinase in an inactive state in the absence of bound ligand. The Protein kinase domain maps to 610–943 (LEFGKVLGSG…PSFPNLTSFL (334 aa)). ATP contacts are provided by residues 616–624 (LGSGAFGKV) and K644. Position 726 is a phosphotyrosine; by autocatalysis (Y726). S759 carries the post-translational modification Phosphoserine. A phosphotyrosine mark is found at Y768 and Y793. D811 serves as the catalytic Proton acceptor. Y842, Y955, and Y969 each carry phosphotyrosine; by autocatalysis. S993 carries the post-translational modification Phosphoserine.

It belongs to the protein kinase superfamily. Tyr protein kinase family. CSF-1/PDGF receptor subfamily. As to quaternary structure, monomer in the absence of bound FLT3LG. Homodimer in the presence of bound FLT3LG. Interacts with FIZ1 following ligand activation. Interacts with FES, FER, LYN, FGR, HCK, SRC and GRB2. Interacts with PTPRJ/DEP-1 and PTPN11/SHP2. Interacts with RNF115 and RNF126. In terms of assembly, (Microbial infection) Interacts with human cytomegalovirus protein UL7. In terms of processing, N-glycosylated, contains complex N-glycans with sialic acid. Post-translationally, autophosphorylated on several tyrosine residues in response to FLT3LG binding. FLT3LG binding also increases phosphorylation of mutant kinases that are constitutively activated. Dephosphorylated by PTPRJ/DEP-1, PTPN1, PTPN6/SHP-1, and to a lesser degree by PTPN12. Dephosphorylation is important for export from the endoplasmic reticulum and location at the cell membrane. Rapidly ubiquitinated by UBE2L6 and the E3 ubiquitin-protein ligase SIAH1 after autophosphorylation, leading to its proteasomal degradation. In terms of tissue distribution, detected in bone marrow, in hematopoietic stem cells, in myeloid progenitor cells and in granulocyte/macrophage progenitor cells (at protein level). Detected in bone marrow, liver, thymus, spleen and lymph node, and at low levels in kidney and pancreas. Highly expressed in T-cell leukemia.

The protein resides in the membrane. It is found in the endoplasmic reticulum lumen. It carries out the reaction L-tyrosyl-[protein] + ATP = O-phospho-L-tyrosyl-[protein] + ADP + H(+). With respect to regulation, present in an inactive conformation in the absence of bound ligand. FLT3LG binding leads to dimerization and activation by autophosphorylation. In terms of biological role, tyrosine-protein kinase that acts as a cell-surface receptor for the cytokine FLT3LG and regulates differentiation, proliferation and survival of hematopoietic progenitor cells and of dendritic cells. Promotes phosphorylation of SHC1 and AKT1, and activation of the downstream effector MTOR. Promotes activation of RAS signaling and phosphorylation of downstream kinases, including MAPK1/ERK2 and/or MAPK3/ERK1. Promotes phosphorylation of FES, FER, PTPN6/SHP, PTPN11/SHP-2, PLCG1, and STAT5A and/or STAT5B. Activation of wild-type FLT3 causes only marginal activation of STAT5A or STAT5B. Mutations that cause constitutive kinase activity promote cell proliferation and resistance to apoptosis via the activation of multiple signaling pathways. This is Receptor-type tyrosine-protein kinase FLT3 (FLT3) from Homo sapiens (Human).